Here is a 151-residue protein sequence, read N- to C-terminus: MSTPARRRLMRDFKRLQEDPPTGVSGAPTDNNIMIWNAVIFGPHDTPFEDGTFKLTIEFTEEYPNKPPTVRFVSKVFHPNVYADGGICLDILQNRWSPTYDVSAILTSIQSLLSDPNPNSPANSTAAQLYKENRREYEKRVKACVEQSFID.

The 147-residue stretch at 4-150 folds into the UBC core domain; the sequence is PARRRLMRDF…VKACVEQSFI (147 aa). Residue cysteine 88 is the Glycyl thioester intermediate of the active site.

The protein belongs to the ubiquitin-conjugating enzyme family.

The protein resides in the nucleus. The catalysed reaction is S-ubiquitinyl-[E1 ubiquitin-activating enzyme]-L-cysteine + [E2 ubiquitin-conjugating enzyme]-L-cysteine = [E1 ubiquitin-activating enzyme]-L-cysteine + S-ubiquitinyl-[E2 ubiquitin-conjugating enzyme]-L-cysteine.. It participates in protein modification; protein ubiquitination. In terms of biological role, E2 ubiquitin-conjugating enzyme that accepts ubiquitin from the ubiquitin-activating enzyme E1 and transfers it to a E3 ubiquitin-protein ligase. Required for postreplication repair of UV-damaged DNA. Involved in the negative regulation of the Ras/MAPK signaling pathway in the wing by acting with the putative E3 ligases poe, Kcmf1 and Ufd4 to mediate the ubiquitination and proteasomal degradation of rl/MAPK. Required for in mitophagy. In Drosophila melanogaster (Fruit fly), this protein is Ubiquitin-conjugating enzyme E2-17 kDa.